We begin with the raw amino-acid sequence, 119 residues long: Large ribosomal subunit protein bL20 (119 aa).

It belongs to the bacterial ribosomal protein bL20 family.

In terms of biological role, binds directly to 23S ribosomal RNA and is necessary for the in vitro assembly process of the 50S ribosomal subunit. It is not involved in the protein synthesizing functions of that subunit. The protein is Large ribosomal subunit protein bL20 of Shewanella woodyi (strain ATCC 51908 / MS32).